Consider the following 764-residue polypeptide: MARTHIPGFPRIGAQRELKFAQESFWRGESGEPHLRGVARELRARHWQLQQDAGLDFVTVGDFAYYDQMLNLSALLGALPQRFGFEPKTLSLAEYYELARGNAAQPAMEMTKWFDTNYHYLVPELGPQTSFDGGVEWLFEEIDEALALNLPVKPVLIGPITYLWLSKSHVAGFDRLSLLPKLVIRYARLLDKLRQSGIEWVQLDEPALCVDLPAEWLDAFSAAYEVLGTSGVKVLLATYFESAAEHAPRVAALPVAGVHLDLVRAPQQLDAWRAALPAHAVLSAGVIDGRNIWRADLGEIVESLQSLQAEFGERLWIAPSCSLLHVPVSLDAEKKLDADLKSWLAFATEKLAEVATLALALRDPAAAEPALAATDRALEARRRSSAVVNALVQKRVAAVSSAMAERQSPFAERNRLQREALGLPLLPTTTIGSFPQTAAIRQARAAYKRGELRALDYLQRMRTEIEIAVRKQEELGLDVLVHGEAERNDMVEYFGEQLWGYAFTENGWVQSYGSRCVKPPIIYGDVYRPEPMTVETTRYAQSLTQRLMKGMLTGPVTMLQWSFVRDDQPRSTTALQLALAIRDEVVDLEKAGIRIIQIDEPAFREGLPLRRADWAAYLEWATRAFRISAAGVADQTQIHTHMCYSEFNDILPSIAAMDADVITIETSRSAMELLDGFGAFAYPNEIGPGVYDIHSPRVPGADAMQRLLERACEVIPAERLWVNPDCGLKTRGWPETEAALANMVRAAKALRAKLAARQADELTA.

5-methyltetrahydropteroyltri-L-glutamate contacts are provided by residues 16–19 (RELK) and K112. Residues 431-433 (IGS) and E484 contribute to the L-homocysteine site. Residues 431–433 (IGS) and E484 contribute to the L-methionine site. 5-methyltetrahydropteroyltri-L-glutamate contacts are provided by residues 515–516 (RC) and W561. D599 contributes to the L-homocysteine binding site. An L-methionine-binding site is contributed by D599. Residue E605 participates in 5-methyltetrahydropteroyltri-L-glutamate binding. The Zn(2+) site is built by H641, C643, and E665. Residue H694 is the Proton donor of the active site. A Zn(2+)-binding site is contributed by C726.

It belongs to the vitamin-B12 independent methionine synthase family. Requires Zn(2+) as cofactor.

The enzyme catalyses 5-methyltetrahydropteroyltri-L-glutamate + L-homocysteine = tetrahydropteroyltri-L-glutamate + L-methionine. It functions in the pathway amino-acid biosynthesis; L-methionine biosynthesis via de novo pathway; L-methionine from L-homocysteine (MetE route): step 1/1. Functionally, catalyzes the transfer of a methyl group from 5-methyltetrahydrofolate to homocysteine resulting in methionine formation. In Paraburkholderia xenovorans (strain LB400), this protein is 5-methyltetrahydropteroyltriglutamate--homocysteine methyltransferase.